Consider the following 257-residue polypeptide: (R)-2-haloacid dehalogenase (257 aa).

Belongs to the HAD-like hydrolase superfamily. S-2-haloalkanoic acid dehalogenase family.

It carries out the reaction an (R)-2-haloacid + H2O = a (2S)-2-hydroxycarboxylate + a halide anion + H(+). Functionally, catalyzes the hydrolytic dehalogenation of small (R)-2-haloalkanoic acids to yield the corresponding (S)-2-hydroxyalkanoic acids. Acts on acids of short chain lengths, C(2) to C(4), with inversion of configuration at C-2. The sequence is that of (R)-2-haloacid dehalogenase (dehI) from Rhizobium sp. (strain NHG3).